A 131-amino-acid polypeptide reads, in one-letter code: Ponticulin-like protein M (131 aa).

An N-terminal signal peptide occupies residues 1–19 (MKFLSTLILLLSVLALVRG). Ser106 carries the GPI-like-anchor amidated serine lipid modification. Positions 107 to 131 (NSASSPLTTAVLFVVAFAAAIALLL) are cleaved as a propeptide — removed in mature form.

This sequence belongs to the ponticulin family. Post-translationally, the GPI-like-anchor contains a phosphoceramide group, rather than a phosphatidyl group.

It is found in the cell membrane. Its function is as follows. Binds F-actin and nucleates actin assembly. The sequence is that of Ponticulin-like protein M (ponM) from Dictyostelium discoideum (Social amoeba).